Consider the following 64-residue polypeptide: Large ribosomal subunit protein bL35 (64 aa).

The span at 1 to 10 (MPKMKTNSAA) shows a compositional bias: polar residues. Residues 1-64 (MPKMKTNSAA…AKKLHQLLQK (64 aa)) form a disordered region. Over residues 54-64 (QAKKLHQLLQK) the composition is skewed to basic residues.

Belongs to the bacterial ribosomal protein bL35 family.

The sequence is that of Large ribosomal subunit protein bL35 from Bifidobacterium longum (strain NCC 2705).